Consider the following 265-residue polypeptide: Imidazole glycerol phosphate synthase subunit HisF (265 aa).

Catalysis depends on residues D17 and D136.

Belongs to the HisA/HisF family. In terms of assembly, heterodimer of HisH and HisF.

Its subcellular location is the cytoplasm. It catalyses the reaction 5-[(5-phospho-1-deoxy-D-ribulos-1-ylimino)methylamino]-1-(5-phospho-beta-D-ribosyl)imidazole-4-carboxamide + L-glutamine = D-erythro-1-(imidazol-4-yl)glycerol 3-phosphate + 5-amino-1-(5-phospho-beta-D-ribosyl)imidazole-4-carboxamide + L-glutamate + H(+). It participates in amino-acid biosynthesis; L-histidine biosynthesis; L-histidine from 5-phospho-alpha-D-ribose 1-diphosphate: step 5/9. Its function is as follows. IGPS catalyzes the conversion of PRFAR and glutamine to IGP, AICAR and glutamate. The HisF subunit catalyzes the cyclization activity that produces IGP and AICAR from PRFAR using the ammonia provided by the HisH subunit. The chain is Imidazole glycerol phosphate synthase subunit HisF from Mycobacterium avium (strain 104).